Consider the following 197-residue polypeptide: Large ribosomal subunit protein bL9 (197 aa).

Positions 178–197 (GEFFDPEAQEDEAAAGETAQ) are disordered. Residues 181 to 191 (FDPEAQEDEAA) are compositionally biased toward acidic residues.

Belongs to the bacterial ribosomal protein bL9 family.

In terms of biological role, binds to the 23S rRNA. In Bradyrhizobium sp. (strain BTAi1 / ATCC BAA-1182), this protein is Large ribosomal subunit protein bL9.